The chain runs to 515 residues: Maturase K (515 aa).

Belongs to the intron maturase 2 family. MatK subfamily.

It is found in the plastid. The protein resides in the chloroplast. In terms of biological role, usually encoded in the trnK tRNA gene intron. Probably assists in splicing its own and other chloroplast group II introns. This is Maturase K from Pinus leiophylla (Chihuahua pine).